The primary structure comprises 66 residues: Cold shock-like protein (66 aa).

The CSD domain occupies 3–62; that stretch reads GKVKWFDSKKGYGFITKDEGGDVFVHWSAIEMEGFKTLKEGQVVEFEIQEGKKGPQAAHV.

Monomer.

It is found in the cytoplasm. This Thermotoga maritima (strain ATCC 43589 / DSM 3109 / JCM 10099 / NBRC 100826 / MSB8) protein is Cold shock-like protein (csp).